A 101-amino-acid polypeptide reads, in one-letter code: NADH-ubiquinone oxidoreductase chain 5 (101 aa).

3 consecutive transmembrane segments (helical) span residues 12-32, 48-68, and 79-99; these read IALF…SGVI, FLFI…FICF, and LVIY…LFII.

This sequence belongs to the complex I subunit 5 family.

It localises to the mitochondrion inner membrane. It catalyses the reaction a ubiquinone + NADH + 5 H(+)(in) = a ubiquinol + NAD(+) + 4 H(+)(out). Its function is as follows. Core subunit of the mitochondrial membrane respiratory chain NADH dehydrogenase (Complex I) that is believed to belong to the minimal assembly required for catalysis. Complex I functions in the transfer of electrons from NADH to the respiratory chain. The immediate electron acceptor for the enzyme is believed to be ubiquinone. The chain is NADH-ubiquinone oxidoreductase chain 5 (ND5) from Leishmania tarentolae (Sauroleishmania tarentolae).